The following is a 470-amino-acid chain: Acetyl-CoA decarbonylase/synthase complex subunit gamma 1 (470 aa).

In terms of domain architecture, 4Fe-4S spans 1–60 (MKINSPLEAYKYLPQTNCGECGQPTCMAFASTLIDRSGKTTDCPPLIKEKKFAKKLAELD). [4Fe-4S] cluster is bound by residues Cys18, Cys21, Cys26, and Cys43.

In terms of assembly, heterodimer of delta and gamma chains. The ACDS complex is made up of alpha, epsilon, beta, gamma and delta chains with a probable stoichiometry of (alpha(2)epsilon(2))(4)-beta(8)-(gamma(1)delta(1))(8). Corrinoid is required as a cofactor. The cofactor is [4Fe-4S] cluster.

It catalyses the reaction 5,6,7,8-tetrahydrosarcinapterin + methyl-Co(III)-[corrinoid Fe-S protein] = 5-methyltetrahydrosarcinapterin + Co(I)-[corrinoid Fe-S protein] + H(+). It participates in one-carbon metabolism; methanogenesis from acetate. Part of a complex that catalyzes the reversible cleavage of acetyl-CoA, allowing growth on acetate as sole source of carbon and energy. The sequence is that of Acetyl-CoA decarbonylase/synthase complex subunit gamma 1 from Methanosarcina mazei (strain ATCC BAA-159 / DSM 3647 / Goe1 / Go1 / JCM 11833 / OCM 88) (Methanosarcina frisia).